We begin with the raw amino-acid sequence, 167 residues long: Caltractin (167 aa).

Residues 1–18 (MSSARTVRKDKPRGRHHG) are compositionally biased toward basic residues. The disordered stretch occupies residues 1–23 (MSSARTVRKDKPRGRHHGLTQQK). EF-hand domains are found at residues 22 to 57 (QKRQ…LGFE), 58 to 93 (MTEE…KIGE), 95 to 130 (DTKE…LGEN), and 131 to 166 (FTVK…TSYA). Aspartate 35, aspartate 37, serine 39, threonine 41, glutamate 46, aspartate 71, aspartate 73, serine 75, glutamate 82, aspartate 108, aspartate 110, asparagine 112, lysine 114, aspartate 119, aspartate 144, aspartate 146, aspartate 148, glutamate 150, and glutamate 155 together coordinate Ca(2+).

Belongs to the centrin family.

The protein resides in the cytoplasm. It localises to the cytoskeleton. It is found in the microtubule organizing center. Its function is as follows. Plays a fundamental role in microtubule-organizing center structure and function. This Atriplex nummularia (Old man saltbush) protein is Caltractin.